We begin with the raw amino-acid sequence, 232 residues long: Small ribosomal subunit protein uS3 (232 aa).

Residues 39–107 enclose the KH type-2 domain; that stretch reads VRQFLTKELS…PAQINIAEVR (69 aa).

This sequence belongs to the universal ribosomal protein uS3 family. As to quaternary structure, part of the 30S ribosomal subunit. Forms a tight complex with proteins S10 and S14.

Its function is as follows. Binds the lower part of the 30S subunit head. Binds mRNA in the 70S ribosome, positioning it for translation. In Sodalis glossinidius (strain morsitans), this protein is Small ribosomal subunit protein uS3.